A 954-amino-acid chain; its full sequence is MNQPGGAAAPQADGASAAGRKSTASRERLKRSQKSTKVEGPEPVPAEASLSAEQGTMTEVKVKTELPDDYIQEVIWQGEAKEEKKAVSKDGTSDVPAEICVVIGGVRNQQTLDGKAPEGSPHGGSVRSRYSGTWIFDQALRYASGSYECGICGKKYKYYNCFQTHVRAHRDTEATSGEGASQSNNFRYTCDICGKKYKYYSCFQEHRDLHAVDVFSVEGAPENRADPFDQGVVATDEVKEEPPEPFQKIGPKTGNYTCEFCGKQYKYYTPYQEHVALHAPISTAPGWEPPDDPDTGSECSHPEVSPSPRFVAAKTQTNQSGKKAPASVVRCATLLHRTPPATQTQTFRTPNSGSPASKATAAESAFSRRVEGKAQNHFEETNSSSQNSSEPYTCGACGIQFQFYNNLLEHMQSHAADNENNIASNQSRSPPAVVEEKWKPQAQRNSANNTTTSGLTPNSMIPEKERQNIAERLLRVMCADLGALSVVSGKEFLKLAQTLVDSGARYGAFSVTEILGNFNTLALKHLPRMYNQVKVKVTCALGSNACLGIGVTCHSQSVGPDSCYILTAYQAEGNHIKSYVLGVKGADIRDSGDLVHHWVQNVLSEFVMSEIRTVYVTDCRVSTSAFSKAGMCLRCSACALNSVVQSVLSKRTLQARSMHEVIELLNVCEDLAGSTGLAKETFGSLEETSPPPCWNSVTDSLLLVHERYEQICEFYSRAKKMNLIQSLNKHLLSNLAAILTPVKQAVIELSNESQPTLQLVLPTYVRLEKLFTAKANDAGTVSKLCHLFLEALKENFKVHPAHKVAMILDPQQKLRPVPPYQHEEIIGKVCELINEVKESWAEEADFEPAAKKPRSAAVENPAAQEDDRLGKNEVYDYLQEPLFQATPDLFQYWSCVTQKHTKLAKLAFWLLAVPAVGARSGCVNMCEQALLIKRRRLLSPEDMNKLMFLKSNML.

Residue methionine 1 is modified to N-acetylmethionine. A compositionally biased stretch (low complexity) spans 1-19; that stretch reads MNQPGGAAAPQADGASAAG. A disordered region spans residues 1 to 56; that stretch reads MNQPGGAAAPQADGASAAGRKSTASRERLKRSQKSTKVEGPEPVPAEASLSAEQGT. Residues lysine 63 and lysine 81 each participate in a glycyl lysine isopeptide (Lys-Gly) (interchain with G-Cter in SUMO2) cross-link. 2 consecutive C2H2-type zinc fingers follow at residues 147–169 and 188–210; these read YECG…VRAH and YTCD…RDLH. Lysine 239 participates in a covalent cross-link: Glycyl lysine isopeptide (Lys-Gly) (interchain with G-Cter in SUMO2). A C2H2-type 3 zinc finger spans residues 256–278; sequence YTCEFCGKQYKYYTPYQEHVALH. Disordered regions lie at residues 282–307 and 337–390; these read STAP…VSPS and RTPP…NSSE. The span at 340-357 shows a compositional bias: polar residues; that stretch reads PATQTQTFRTPNSGSPAS. Residues 366 to 380 are compositionally biased toward basic and acidic residues; it reads FSRRVEGKAQNHFEE. Residues 392-414 form a C2H2-type 4 zinc finger; sequence YTCGACGIQFQFYNNLLEHMQSH. The disordered stretch occupies residues 421–463; it reads NIASNQSRSPPAVVEEKWKPQAQRNSANNTTTSGLTPNSMIPE. Lysine 437 participates in a covalent cross-link: Glycyl lysine isopeptide (Lys-Gly) (interchain with G-Cter in SUMO2). A compositionally biased stretch (polar residues) spans 442 to 459; it reads AQRNSANNTTTSGLTPNS.

This sequence belongs to the krueppel C2H2-type zinc-finger protein family. As to quaternary structure, interacts with UHRF2.

It localises to the nucleus. It is found in the chromosome. Functionally, regulates UHRF2 function as a specific 5-hydroxymethylcytosine (5hmC) reader by regulating its chromatin localization. The chain is Zinc finger protein 618 (ZNF618) from Homo sapiens (Human).